Consider the following 751-residue polypeptide: Photosystem I P700 chlorophyll a apoprotein A1 (751 aa).

The next 8 membrane-spanning stretches (helical) occupy residues 73 to 96, 159 to 182, 198 to 222, 294 to 312, 349 to 372, 388 to 414, 436 to 458, and 533 to 551; these read IFSAHFGQLGVILIWLSGMYFHGA, LYSTAIGGLLLAAAMFFAGWFHYH, MNHHLGGLLGLGSLGWAGHQIHVSL, TAHHHVAIAVLFLVAGHMY, WHAQLAINLALFGSLSIVVAHHMY, LSLFTHHMWIGGFCVVGAAAHAAIFMV, AIISHLNWVCIFLGFHSFGLYIH, and FLVHHIHAFTIHVTVLILL. Residues cysteine 575 and cysteine 584 each contribute to the [4Fe-4S] cluster site. 2 consecutive transmembrane segments (helical) span residues 591-612 and 665-687; these read HVFLGLFWMYNSISVVIFHFSW and LSAYGLIFLGAHFIWAFSLMFLF. Histidine 676 serves as a coordination point for chlorophyll a'. The chlorophyll a site is built by methionine 684 and tyrosine 692. Tryptophan 693 is a phylloquinone binding site. A helical transmembrane segment spans residues 725-745; it reads AVGVAHYLLGGIATTWAFFLA.

This sequence belongs to the PsaA/PsaB family. The PsaA/B heterodimer binds the P700 chlorophyll special pair and subsequent electron acceptors. PSI consists of a core antenna complex that captures photons, and an electron transfer chain that converts photonic excitation into a charge separation. The eukaryotic PSI reaction center is composed of at least 11 subunits. P700 is a chlorophyll a/chlorophyll a' dimer, A0 is one or more chlorophyll a, A1 is one or both phylloquinones and FX is a shared 4Fe-4S iron-sulfur center. serves as cofactor.

Its subcellular location is the plastid. It is found in the chloroplast thylakoid membrane. The enzyme catalyses reduced [plastocyanin] + hnu + oxidized [2Fe-2S]-[ferredoxin] = oxidized [plastocyanin] + reduced [2Fe-2S]-[ferredoxin]. In terms of biological role, psaA and PsaB bind P700, the primary electron donor of photosystem I (PSI), as well as the electron acceptors A0, A1 and FX. PSI is a plastocyanin/cytochrome c6-ferredoxin oxidoreductase, converting photonic excitation into a charge separation, which transfers an electron from the donor P700 chlorophyll pair to the spectroscopically characterized acceptors A0, A1, FX, FA and FB in turn. Oxidized P700 is reduced on the lumenal side of the thylakoid membrane by plastocyanin or cytochrome c6. The protein is Photosystem I P700 chlorophyll a apoprotein A1 of Nephroselmis olivacea (Green alga).